We begin with the raw amino-acid sequence, 172 residues long: Small ribosomal subunit protein uS5 (172 aa).

Residues 17–80 (LKEKMIAINR…EEARRNMTKV (64 aa)) enclose the S5 DRBM domain.

Belongs to the universal ribosomal protein uS5 family. As to quaternary structure, part of the 30S ribosomal subunit. Contacts proteins S4 and S8.

Functionally, with S4 and S12 plays an important role in translational accuracy. Located at the back of the 30S subunit body where it stabilizes the conformation of the head with respect to the body. In Polaromonas naphthalenivorans (strain CJ2), this protein is Small ribosomal subunit protein uS5.